The sequence spans 238 residues: Carboxymethylenebutenolidase (238 aa).

Catalysis depends on residues C123, D171, and H201.

This sequence belongs to the dienelactone hydrolase family. Monomer.

It catalyses the reaction 2-(5-oxo-2,5-dihydrofuran-2-ylidene)acetate + H2O = 4-oxohex-2-enedioate + H(+). It functions in the pathway aromatic compound metabolism; 3-chlorocatechol degradation. Ring cleavage of cyclic ester dienelactone to produce maleylacetate. The polypeptide is Carboxymethylenebutenolidase (tcbE) (Pseudomonas sp. (strain P51)).